A 232-amino-acid chain; its full sequence is MSNVDELEIDKFSQLAHKWWDKDSEFKPLHEINPLRLDFIDRHASIAGKKVLDVGCGGGILAESMALRGAQVTGIDLAKKSLKVAQLHSLESGVPIDYRCVAVEDLAAEMPGAFDAVTCMEMLEHVPDPESVVRACSTLVKPGGWVFFSTLNRNAKAYLLAVVGAEYVLNMLPRGTHEYARFLKPSELGRMARHAGLGLQTLSGMGYNPVTRIYSLNDDTAVNYLMATRRAD.

R36, G55, D76, and M120 together coordinate S-adenosyl-L-methionine.

The protein belongs to the methyltransferase superfamily. UbiG/COQ3 family.

The catalysed reaction is a 3-demethylubiquinol + S-adenosyl-L-methionine = a ubiquinol + S-adenosyl-L-homocysteine + H(+). The enzyme catalyses a 3-(all-trans-polyprenyl)benzene-1,2-diol + S-adenosyl-L-methionine = a 2-methoxy-6-(all-trans-polyprenyl)phenol + S-adenosyl-L-homocysteine + H(+). The protein operates within cofactor biosynthesis; ubiquinone biosynthesis. Functionally, O-methyltransferase that catalyzes the 2 O-methylation steps in the ubiquinone biosynthetic pathway. The sequence is that of Ubiquinone biosynthesis O-methyltransferase from Chromobacterium violaceum (strain ATCC 12472 / DSM 30191 / JCM 1249 / CCUG 213 / NBRC 12614 / NCIMB 9131 / NCTC 9757 / MK).